The following is a 361-amino-acid chain: Histidinol-phosphate aminotransferase (361 aa).

At K221 the chain carries N6-(pyridoxal phosphate)lysine.

It belongs to the class-II pyridoxal-phosphate-dependent aminotransferase family. Histidinol-phosphate aminotransferase subfamily. In terms of assembly, homodimer. Requires pyridoxal 5'-phosphate as cofactor.

The enzyme catalyses L-histidinol phosphate + 2-oxoglutarate = 3-(imidazol-4-yl)-2-oxopropyl phosphate + L-glutamate. It functions in the pathway amino-acid biosynthesis; L-histidine biosynthesis; L-histidine from 5-phospho-alpha-D-ribose 1-diphosphate: step 7/9. In Symbiobacterium thermophilum (strain DSM 24528 / JCM 14929 / IAM 14863 / T), this protein is Histidinol-phosphate aminotransferase.